A 66-amino-acid chain; its full sequence is Beta-toxin Cbo3 (66 aa).

The 66-residue stretch at 1-66 (KEGYIVNYHD…VWPLPKKTCN (66 aa)) folds into the LCN-type CS-alpha/beta domain. 4 disulfides stabilise this stretch: cysteine 12-cysteine 65, cysteine 16-cysteine 41, cysteine 25-cysteine 46, and cysteine 29-cysteine 48. Asparagine 66 is subject to Asparagine amide.

Belongs to the long (4 C-C) scorpion toxin superfamily. Sodium channel inhibitor family. Beta subfamily. As to expression, expressed by the venom gland.

Its subcellular location is the secreted. Beta toxins bind voltage-independently at site-4 of sodium channels and shift the voltage of activation toward more negative potentials thereby affecting sodium channel activation and promoting spontaneous and repetitive firing. A mixture of Cbo2 and Cbo3 is weakly active on the human voltage-gated sodium channels Nav1.4/SCN4A and Nav1.6/SCN8A when tested at 200 nM. In vivo, is toxic to mice when intraperitoneally injected. The sequence is that of Beta-toxin Cbo3 from Centruroides bonito (Scorpion).